The primary structure comprises 201 residues: Recombination protein RecR (201 aa).

The segment at 57-74 adopts a C4-type zinc-finger fold; that stretch reads CSICGNITATDTDPCVIC. A Toprim domain is found at 82–178; it reads STVFVVENSR…AVTRLAHGLA (97 aa).

It belongs to the RecR family.

May play a role in DNA repair. It seems to be involved in an RecBC-independent recombinational process of DNA repair. It may act with RecF and RecO. The protein is Recombination protein RecR of Leuconostoc mesenteroides subsp. mesenteroides (strain ATCC 8293 / DSM 20343 / BCRC 11652 / CCM 1803 / JCM 6124 / NCDO 523 / NBRC 100496 / NCIMB 8023 / NCTC 12954 / NRRL B-1118 / 37Y).